A 205-amino-acid chain; its full sequence is Probable molybdenum cofactor guanylyltransferase (205 aa).

Residues 10–12, Lys22, Asp69, and Asp100 contribute to the GTP site; that span reads LAG. Asp100 is a binding site for Mg(2+).

The protein belongs to the MobA family. It depends on Mg(2+) as a cofactor.

The protein resides in the cytoplasm. It catalyses the reaction Mo-molybdopterin + GTP + H(+) = Mo-molybdopterin guanine dinucleotide + diphosphate. Its function is as follows. Transfers a GMP moiety from GTP to Mo-molybdopterin (Mo-MPT) cofactor (Moco or molybdenum cofactor) to form Mo-molybdopterin guanine dinucleotide (Mo-MGD) cofactor. The sequence is that of Probable molybdenum cofactor guanylyltransferase from Natranaerobius thermophilus (strain ATCC BAA-1301 / DSM 18059 / JW/NM-WN-LF).